Reading from the N-terminus, the 338-residue chain is S-adenosylmethionine:tRNA ribosyltransferase-isomerase (338 aa).

The protein belongs to the QueA family. Monomer.

Its subcellular location is the cytoplasm. The enzyme catalyses 7-aminomethyl-7-carbaguanosine(34) in tRNA + S-adenosyl-L-methionine = epoxyqueuosine(34) in tRNA + adenine + L-methionine + 2 H(+). The protein operates within tRNA modification; tRNA-queuosine biosynthesis. Its function is as follows. Transfers and isomerizes the ribose moiety from AdoMet to the 7-aminomethyl group of 7-deazaguanine (preQ1-tRNA) to give epoxyqueuosine (oQ-tRNA). The chain is S-adenosylmethionine:tRNA ribosyltransferase-isomerase from Francisella philomiragia subsp. philomiragia (strain ATCC 25017 / CCUG 19701 / FSC 153 / O#319-036).